Consider the following 585-residue polypeptide: Frizzled-10 (585 aa).

Residues 1 to 24 form the signal peptide; it reads MGPAAGNLVRAVLALCWLAEHCAG. Over 25–229 the chain is Extracellular; sequence ISSIDIERPG…DVYWSKDDKQ (205 aa). Residues 33-154 enclose the FZ domain; it reads PGDGRCQPIE…NDPNYLCMEA (122 aa). Intrachain disulfides connect C38/C99, C46/C92, C83/C121, C110/C151, and C114/C138. N-linked (GlcNAc...) asparagine glycosylation occurs at N52. The tract at residues 155 to 195 is disordered; that stretch reads PNNGSDEPPRGSSMLPPMFRPQRPSTGHDLQQHKDSLSRTS. N-linked (GlcNAc...) asparagine glycosylation occurs at N157. The chain crosses the membrane as a helical span at residues 230–250; that stretch reads FAVIWIAIWSILCFFSSAFTV. Topologically, residues 251-265 are cytoplasmic; that stretch reads LTFLIDPQRFKYPER. A helical membrane pass occupies residues 266 to 286; the sequence is PIIFLSMCYCVYSVGYIIRLF. The Extracellular segment spans residues 287 to 314; the sequence is SGAESIACDRDSGQLYVIQEGLESTGCT. The chain crosses the membrane as a helical span at residues 315–335; it reads IVFLVLYYFGMASSLWWVILT. At 336 to 355 the chain is on the cytoplasmic side; the sequence is LTWFLAAGKKWGHEAIEANS. A helical transmembrane segment spans residues 356–376; the sequence is SYFHLAAWAIPAVKTIMILVM. The Extracellular segment spans residues 377–397; sequence RRVAGDELTGLCYVGSMDVNA. A helical membrane pass occupies residues 398 to 418; it reads LTGFVLIPLACYLIIGTSFIL. The Cytoplasmic portion of the chain corresponds to 419–447; that stretch reads SGFVALFHIRRVMKTGGENTDKLEKLMVR. A helical membrane pass occupies residues 448–468; the sequence is IGVFSVLYTVPATCVIACYFY. The Extracellular segment spans residues 469-506; it reads ERLNMDYWKIVASQQKCKMNNQTKNLDCMMNNSIPAVE. N-linked (GlcNAc...) asparagine glycosylation is found at N489 and N499. The chain crosses the membrane as a helical span at residues 507–527; sequence IFMVKIFMLLVVGITSGMWIW. At 528–585 the chain is on the cytoplasmic side; sequence TSKTLQSWQNVCSRRLKKRSRRKPASVITSSGIYKKPQHPQKTHLAKYESTLQPPTCV. The Lys-Thr-X-X-X-Trp motif, mediates interaction with the PDZ domain of Dvl family members signature appears at 530-535; the sequence is KTLQSW. Residues 583–585 carry the PDZ-binding motif; the sequence is TCV.

This sequence belongs to the G-protein coupled receptor Fz/Smo family. As to quaternary structure, interacts with WNT7A. Expressed in the dorsal ectoderm overlying the developing spinal cord.

The protein resides in the cell membrane. In terms of biological role, receptor for Wnt proteins. Functions in the canonical Wnt/beta-catenin signaling pathway. Activation by WNT7A induces expression of beta-catenin target genes. The canonical Wnt/beta-catenin signaling pathway leads to the activation of disheveled proteins, inhibition of GSK-3 kinase, nuclear accumulation of beta-catenin and activation of Wnt target genes. A second signaling pathway involving PKC and calcium fluxes has been seen for some family members, but it is not yet clear if it represents a distinct pathway or if it can be integrated in the canonical pathway, as PKC seems to be required for Wnt-mediated inactivation of GSK-3 kinase. Both pathways seem to involve interactions with G-proteins. May be involved in transduction and intercellular transmission of polarity information during tissue morphogenesis and/or in differentiated tissues. The protein is Frizzled-10 (FZD10) of Gallus gallus (Chicken).